A 250-amino-acid polypeptide reads, in one-letter code: NH(3)-dependent NAD(+) synthetase (250 aa).

An ATP-binding site is contributed by 30–37 (GVSGGIDS). D36 lines the Mg(2+) pocket. R117 contributes to the deamido-NAD(+) binding site. T137 lines the ATP pocket. E142 lines the Mg(2+) pocket. Deamido-NAD(+) is bound by residues K150 and D157. Residues K166 and S188 each contribute to the ATP site. 234–235 (HK) contributes to the deamido-NAD(+) binding site.

It belongs to the NAD synthetase family. As to quaternary structure, homodimer.

It catalyses the reaction deamido-NAD(+) + NH4(+) + ATP = AMP + diphosphate + NAD(+) + H(+). The protein operates within cofactor biosynthesis; NAD(+) biosynthesis; NAD(+) from deamido-NAD(+) (ammonia route): step 1/1. In terms of biological role, catalyzes the ATP-dependent amidation of deamido-NAD to form NAD. Uses ammonia as a nitrogen source. In Mannheimia succiniciproducens (strain KCTC 0769BP / MBEL55E), this protein is NH(3)-dependent NAD(+) synthetase.